A 443-amino-acid polypeptide reads, in one-letter code: tRNA modification GTPase MnmE (443 aa).

(6S)-5-formyl-5,6,7,8-tetrahydrofolate contacts are provided by arginine 23, glutamate 80, and lysine 120. One can recognise a TrmE-type G domain in the interval 217–367 (GFEVVILGAP…LLAEIGRRAA (151 aa)). Residues 227 to 232 (NAGKSS), 246 to 252 (TDEPGTT), and 271 to 274 (DTAG) contribute to the GTP site. The Mg(2+) site is built by serine 231 and threonine 252. Residue lysine 443 participates in (6S)-5-formyl-5,6,7,8-tetrahydrofolate binding.

Belongs to the TRAFAC class TrmE-Era-EngA-EngB-Septin-like GTPase superfamily. TrmE GTPase family. Homodimer. Heterotetramer of two MnmE and two MnmG subunits. The cofactor is K(+).

Its subcellular location is the cytoplasm. In terms of biological role, exhibits a very high intrinsic GTPase hydrolysis rate. Involved in the addition of a carboxymethylaminomethyl (cmnm) group at the wobble position (U34) of certain tRNAs, forming tRNA-cmnm(5)s(2)U34. This Mesorhizobium japonicum (strain LMG 29417 / CECT 9101 / MAFF 303099) (Mesorhizobium loti (strain MAFF 303099)) protein is tRNA modification GTPase MnmE.